The primary structure comprises 342 residues: Ribosomal RNA small subunit methyltransferase C (342 aa).

This sequence belongs to the methyltransferase superfamily. RsmC family. As to quaternary structure, monomer.

It is found in the cytoplasm. The catalysed reaction is guanosine(1207) in 16S rRNA + S-adenosyl-L-methionine = N(2)-methylguanosine(1207) in 16S rRNA + S-adenosyl-L-homocysteine + H(+). Functionally, specifically methylates the guanine in position 1207 of 16S rRNA in the 30S particle. This Hahella chejuensis (strain KCTC 2396) protein is Ribosomal RNA small subunit methyltransferase C.